We begin with the raw amino-acid sequence, 332 residues long: DNA-directed RNA polymerase subunit alpha (332 aa).

Positions 1–234 (MTVTVSQVLR…DQLSVFGDFT (234 aa)) are alpha N-terminal domain (alpha-NTD). Residues 248–332 (VDPVLLRPID…PGVSQYGMLG (85 aa)) are alpha C-terminal domain (alpha-CTD).

It belongs to the RNA polymerase alpha chain family. As to quaternary structure, homodimer. The RNAP catalytic core consists of 2 alpha, 1 beta, 1 beta' and 1 omega subunit. When a sigma factor is associated with the core the holoenzyme is formed, which can initiate transcription.

The enzyme catalyses RNA(n) + a ribonucleoside 5'-triphosphate = RNA(n+1) + diphosphate. Its function is as follows. DNA-dependent RNA polymerase catalyzes the transcription of DNA into RNA using the four ribonucleoside triphosphates as substrates. This chain is DNA-directed RNA polymerase subunit alpha, found in Xylella fastidiosa (strain M23).